The chain runs to 504 residues: UDP-N-acetylmuramoylalanine--D-glutamate ligase (504 aa).

129 to 135 (GTNGKTT) contributes to the ATP binding site.

It belongs to the MurCDEF family.

It localises to the cytoplasm. The catalysed reaction is UDP-N-acetyl-alpha-D-muramoyl-L-alanine + D-glutamate + ATP = UDP-N-acetyl-alpha-D-muramoyl-L-alanyl-D-glutamate + ADP + phosphate + H(+). It participates in cell wall biogenesis; peptidoglycan biosynthesis. In terms of biological role, cell wall formation. Catalyzes the addition of glutamate to the nucleotide precursor UDP-N-acetylmuramoyl-L-alanine (UMA). This is UDP-N-acetylmuramoylalanine--D-glutamate ligase from Burkholderia pseudomallei (strain 668).